Consider the following 114-residue polypeptide: MTYVIGSECVDVMDKSCVQECPVDCIYEGARMLYINPDECVDCGACKPACRVEAIYWEGDLPDDQHQHLGDNAAFFHQVLPGRVAPLGSPGGAAAVGPIGVDTPLVAAIPVECP.

Cysteine 9 and cysteine 17 together coordinate [3Fe-4S] cluster. Positions 21, 40, 43, and 46 each coordinate [4Fe-4S] cluster. The 30-residue stretch at 31 to 60 (RMLYINPDECVDCGACKPACRVEAIYWEGD) folds into the 4Fe-4S ferredoxin-type domain. Cysteine 50 contributes to the [3Fe-4S] cluster binding site.

[4Fe-4S] cluster serves as cofactor. The cofactor is [3Fe-4S] cluster.

Ferredoxins are iron-sulfur proteins that transfer electrons in a wide variety of metabolic reactions. The chain is Ferredoxin (fdxA) from Mycobacterium tuberculosis (strain ATCC 25618 / H37Rv).